Here is an 800-residue protein sequence, read N- to C-terminus: DNA topoisomerase 4 subunit A (800 aa).

In terms of domain architecture, Topo IIA-type catalytic spans 31–496 (LPDVRDGLKP…ISEIKIDKEV (466 aa)). Y119 acts as the O-(5'-phospho-DNA)-tyrosine intermediate in catalysis.

It belongs to the type II topoisomerase GyrA/ParC subunit family. ParC type 2 subfamily. Heterotetramer composed of ParC and ParE.

It is found in the cell membrane. It catalyses the reaction ATP-dependent breakage, passage and rejoining of double-stranded DNA.. Topoisomerase IV is essential for chromosome segregation. It relaxes supercoiled DNA. Performs the decatenation events required during the replication of a circular DNA molecule. This Staphylococcus epidermidis (strain ATCC 12228 / FDA PCI 1200) protein is DNA topoisomerase 4 subunit A.